We begin with the raw amino-acid sequence, 493 residues long: Ketol-acid reductoisomerase (NADP(+)) (493 aa).

The 194-residue stretch at Ala15–Ser208 folds into the KARI N-terminal Rossmann domain. Residues Cys45–Gln48, Arg68, Arg76, Ser78, and Asp108–Gln110 contribute to the NADP(+) site. His132 is an active-site residue. Gly158 is an NADP(+) binding site. KARI C-terminal knotted domains follow at residues Ser209–Ala344 and Phe345–Met486. Residues Asp217, Glu221, Glu389, and Glu393 each coordinate Mg(2+). Ser414 is a binding site for substrate.

Belongs to the ketol-acid reductoisomerase family. It depends on Mg(2+) as a cofactor.

It catalyses the reaction (2R)-2,3-dihydroxy-3-methylbutanoate + NADP(+) = (2S)-2-acetolactate + NADPH + H(+). The catalysed reaction is (2R,3R)-2,3-dihydroxy-3-methylpentanoate + NADP(+) = (S)-2-ethyl-2-hydroxy-3-oxobutanoate + NADPH + H(+). It functions in the pathway amino-acid biosynthesis; L-isoleucine biosynthesis; L-isoleucine from 2-oxobutanoate: step 2/4. It participates in amino-acid biosynthesis; L-valine biosynthesis; L-valine from pyruvate: step 2/4. Functionally, involved in the biosynthesis of branched-chain amino acids (BCAA). Catalyzes an alkyl-migration followed by a ketol-acid reduction of (S)-2-acetolactate (S2AL) to yield (R)-2,3-dihydroxy-isovalerate. In the isomerase reaction, S2AL is rearranged via a Mg-dependent methyl migration to produce 3-hydroxy-3-methyl-2-ketobutyrate (HMKB). In the reductase reaction, this 2-ketoacid undergoes a metal-dependent reduction by NADPH to yield (R)-2,3-dihydroxy-isovalerate. This Aeromonas hydrophila subsp. hydrophila (strain ATCC 7966 / DSM 30187 / BCRC 13018 / CCUG 14551 / JCM 1027 / KCTC 2358 / NCIMB 9240 / NCTC 8049) protein is Ketol-acid reductoisomerase (NADP(+)).